Consider the following 103-residue polypeptide: uncharacterized protein (103 aa).

2 helical membrane passes run 42 to 62 (PFPL…VLLA) and 65 to 85 (TGTL…FICA).

Its subcellular location is the membrane. This is an uncharacterized protein from Saccharomyces cerevisiae (strain ATCC 204508 / S288c) (Baker's yeast).